A 447-amino-acid polypeptide reads, in one-letter code: Phosphatidylinositol N-acetylglucosaminyltransferase subunit A (447 aa).

The Cytoplasmic portion of the chain corresponds to 1–387; sequence MAEPPKLRVL…NRSLLERLMR (387 aa). The helical transmembrane segment at 388-408 threads the bilayer; sequence FLSCGAWAGKLFCMVMILDYL. Residues 409-447 lie on the Lumenal side of the membrane; that stretch reads LWRLLQLLQPDEDIEEAPDICLCHHRGVEVSEGLRKKIK.

It belongs to the glycosyltransferase group 1 family. Glycosyltransferase 4 subfamily. In terms of tissue distribution, expressed in roots, stems, leaves, flowers and pollen grains.

Its subcellular location is the endoplasmic reticulum membrane. The catalysed reaction is a 1,2-diacyl-sn-glycero-3-phospho-(1D-myo-inositol) + UDP-N-acetyl-alpha-D-glucosamine = a 6-(N-acetyl-alpha-D-glucosaminyl)-1-(1,2-diacyl-sn-glycero-3-phospho)-1D-myo-inositol + UDP + H(+). Its pathway is glycolipid biosynthesis; glycosylphosphatidylinositol-anchor biosynthesis. Functionally, necessary for the synthesis of N-acetylglucosaminyl-phosphatidylinositol, the very early intermediate in GPI-anchor biosynthesis. Required for pollen germination and pollen tube growth. This chain is Phosphatidylinositol N-acetylglucosaminyltransferase subunit A, found in Arabidopsis thaliana (Mouse-ear cress).